A 323-amino-acid chain; its full sequence is Methionyl-tRNA formyltransferase (323 aa).

(6S)-5,6,7,8-tetrahydrofolate is bound at residue 113-116 (SLLP).

This sequence belongs to the Fmt family.

It catalyses the reaction L-methionyl-tRNA(fMet) + (6R)-10-formyltetrahydrofolate = N-formyl-L-methionyl-tRNA(fMet) + (6S)-5,6,7,8-tetrahydrofolate + H(+). Functionally, attaches a formyl group to the free amino group of methionyl-tRNA(fMet). The formyl group appears to play a dual role in the initiator identity of N-formylmethionyl-tRNA by promoting its recognition by IF2 and preventing the misappropriation of this tRNA by the elongation apparatus. The sequence is that of Methionyl-tRNA formyltransferase from Porphyromonas gingivalis (strain ATCC BAA-308 / W83).